A 2161-amino-acid chain; its full sequence is Voltage-dependent L-type calcium channel subunit alpha-1D (2161 aa).

Disordered regions lie at residues 1–21, 30–49, and 64–100; these read MMMMMMMKKMQHQRQQQADHA, TRLPLSGEGPTSQPNSSKQT, and KAAQTMSTSAPPPVGSLSQRKRQQYAKSKKQGNSSNS. Residues 1–126 lie on the Cytoplasmic side of the membrane; it reads MMMMMMMKKM…RACISIVEWK (126 aa). The segment covering 38–49 has biased composition (polar residues); it reads GPTSQPNSSKQT. The span at 82–93 shows a compositional bias: basic residues; that stretch reads QRKRQQYAKSKK. An I repeat occupies 113-409; the sequence is NPIRRACISI…LVLGVLSGEF (297 aa). The helical transmembrane segment at 127 to 145 threads the bilayer; sequence PFDIFILLAIFANCVALAI. Residues 146-163 are Extracellular-facing; sequence YIPFPEDDSNSTNHNLEK. A glycan (N-linked (GlcNAc...) asparagine) is linked at Asn155. A helical membrane pass occupies residues 164-183; it reads VEYAFLIIFTVETFLKIIAY. The Cytoplasmic portion of the chain corresponds to 184–195; the sequence is GLLLHPNAYVRN. A helical transmembrane segment spans residues 196–214; it reads GWNLLDFVIVIVGLFSVIL. The Extracellular segment spans residues 215–235; it reads EQLTKETEGGNHSSGKSGGFD. N-linked (GlcNAc...) asparagine glycosylation is present at Asn225. The helical transmembrane segment at 236-254 threads the bilayer; sequence VKALRAFRVLRPLRLVSGV. The Cytoplasmic portion of the chain corresponds to 255–273; sequence PSLQVVLNSIIKAMVPLLH. A helical transmembrane segment spans residues 274-293; sequence IALLVLFVIIIYAIIGLELF. Residues 294 to 381 are Extracellular-facing; that stretch reads IGKMHKTCFF…WMNDAMGFEL (88 aa). Asn329 carries an N-linked (GlcNAc...) asparagine glycan. Glu364 provides a ligand contact to Ca(2+). Residues 382–406 traverse the membrane as a helical segment; sequence PWVYFVSLVIFGSFFVLNLVLGVLS. The Cytoplasmic portion of the chain corresponds to 407–523; sequence GEFSKEREKA…RRCRAAVKSV (117 aa). A binding to the beta subunit region spans residues 429 to 446; that stretch reads QQLEEDLKGYLDWITQAE. The tract at residues 449–482 is disordered; it reads DPENEEEGGEEGKRNTSMPTSETESVNTENVSGE. Polar residues predominate over residues 463–479; sequence NTSMPTSETESVNTENV. The stretch at 509-755 is one II repeat; that stretch reads NRFNRRRCRA…VFLAIAVDNL (247 aa). Residues 524-543 form a helical membrane-spanning segment; it reads TFYWLVIVLVFLNTLTISSE. Over 544 to 558 the chain is Extracellular; it reads HYNQPDWLTQIQDIA. The chain crosses the membrane as a helical span at residues 559 to 577; sequence NKVLLALFTCEMLVKMYSL. Over 578–585 the chain is Cytoplasmic; sequence GLQAYFVS. A helical transmembrane segment spans residues 586–604; it reads LFNRFDCFVVCGGITETIL. The Extracellular segment spans residues 605–614; the sequence is VELEIMSPLG. Residues 615-633 traverse the membrane as a helical segment; sequence ISVFRCVRLLRIFKVTRHW. The Cytoplasmic portion of the chain corresponds to 634 to 652; the sequence is TSLSNLVASLLNSMKSIAS. The chain crosses the membrane as a helical span at residues 653–673; sequence LLLLLFLFIIIFSLLGMQLFG. Residues 674–727 lie on the Extracellular side of the membrane; the sequence is GKFNFDETQTKRSTFDNFPQALLTVFQILTGEDWNAVMYDGIMAYGGPSSSGMI. Glu705 lines the Ca(2+) pocket. A helical membrane pass occupies residues 728–752; sequence VCIYFIILFICGNYILLNVFLAIAV. Residues 753-886 lie on the Cytoplasmic side of the membrane; that stretch reads DNLADAESLN…VGCHKLINHH (134 aa). Residues 766–790 are compositionally biased toward basic and acidic residues; that stretch reads KEEAEEKERKKIARKESLENKKNNK. The interval 766 to 850 is disordered; the sequence is KEEAEEKERK…AGPRPRRISE (85 aa). Positions 791–802 are enriched in polar residues; it reads PEVNQIANSDNK. The segment covering 825–838 has biased composition (acidic residues); sequence VGEEEEEEEEDEPE. Residues 873-1155 form an III repeat; the sequence is NPIRVGCHKL…IFVGFVIVTF (283 aa). A helical transmembrane segment spans residues 887-905; sequence IFTNLILVFIMLSSAALAA. Topologically, residues 906–921 are extracellular; sequence EDPIRSHSFRNTILGY. Residues 922-941 form a helical membrane-spanning segment; it reads FDYAFTAIFTVEILLKMTTF. Topologically, residues 942-953 are cytoplasmic; it reads GAFLHKGAFCRN. Residues 954–972 traverse the membrane as a helical segment; sequence YFNLLDMLVVGVSLVSFGI. At 973 to 978 the chain is on the extracellular side; that stretch reads QSSAIS. The chain crosses the membrane as a helical span at residues 979-998; the sequence is VVKILRVLRVLRPLRAINRA. Over 999–1017 the chain is Cytoplasmic; it reads KGLKHVVQCVFVAIRTIGN. Residues 1018 to 1037 form a helical membrane-spanning segment; the sequence is IMIVTTLLQFMFACIGVQLF. At 1038-1127 the chain is on the extracellular side; that stretch reads KGKFYRCTDE…IGPIYNHRVE (90 aa). A dihydropyridine binding region spans residues 1075 to 1165; sequence RIWQNSDFNF…QEQGEKEYKN (91 aa). Glu1101 lines the Ca(2+) pocket. Residues 1128–1148 traverse the membrane as a helical segment; the sequence is ISIFFIIYIIIVAFFMMNIFV. Over 1149–1205 the chain is Cytoplasmic; sequence GFVIVTFQEQGEKEYKNCELDKNQRQCVEYALKARPLRRYIPKNPYQYKFWYVVNSS. The stretch at 1192 to 1467 is one IV repeat; sequence NPYQYKFWYV…LFVAVIMDNF (276 aa). Residues 1206–1224 form a helical membrane-spanning segment; sequence PFEYMMFVLIMLNTLCLAM. Residues 1225–1239 lie on the Extracellular side of the membrane; that stretch reads QHYEQSKMFNDAMDI. Residues 1240–1259 form a helical membrane-spanning segment; sequence LNMVFTGVFTVEMVLKVIAF. The Cytoplasmic portion of the chain corresponds to 1260–1266; it reads KPKGYFS. Residues 1267–1288 form a helical membrane-spanning segment; sequence DAWNTFDSLIVIGSIIDVALSE. Over 1289 to 1313 the chain is Extracellular; that stretch reads ADPTESENVPVPTATPGNSEESNRI. Residues 1314–1333 traverse the membrane as a helical segment; the sequence is SITFFRLFRVMRLVKLLSRG. The Cytoplasmic portion of the chain corresponds to 1334–1352; that stretch reads EGIRTLLWTFIKSFQALPY. Residues 1353–1372 traverse the membrane as a helical segment; that stretch reads VALLIAMLFFIYAVIGMQMF. Over 1373 to 1439 the chain is Extracellular; it reads GKVAMRDNNQ…GEEYTCGSNF (67 aa). The dihydropyridine binding stretch occupies residues 1420 to 1486; sequence LCDPESDYNP…LGPHHLDEFK (67 aa). Residues 1432–1475 are phenylalkylamine binding; the sequence is EYTCGSNFAIVYFISFYMLCAFLIINLFVAVIMDNFDYLTRDWS. Residues 1440 to 1464 traverse the membrane as a helical segment; sequence AIVYFISFYMLCAFLIINLFVAVIM. At 1465–2161 the chain is on the cytoplasmic side; it reads DNFDYLTRDW…ADEMICITTL (697 aa). Disordered regions lie at residues 1659 to 1678, 1684 to 1804, 1872 to 1919, and 2108 to 2152; these read SCDLQDDEPEETKREEEDDV, ALLG…VKRT, PGRN…ASHR, and NGNV…EDLA. The span at 1745–1763 shows a compositional bias: polar residues; it reads SIGKQVPTSTNANLNNANM. Basic and acidic residues predominate over residues 1779–1797; that stretch reads HVSENGHHSSHKHDREPQR. The span at 2138-2152 shows a compositional bias: acidic residues; the sequence is SDEEPDPGRDEEDLA.

Belongs to the calcium channel alpha-1 subunit (TC 1.A.1.11) family. CACNA1D subfamily. In terms of assembly, voltage-dependent calcium channels are multisubunit complexes, consisting of alpha-1, alpha-2, beta and delta subunits in a 1:1:1:1 ratio. The channel activity is directed by the pore-forming and voltage-sensitive alpha-1 subunit. In many cases, this subunit is sufficient to generate voltage-sensitive calcium channel activity. The auxiliary subunits beta and alpha-2/delta linked by a disulfide bridge regulate the channel activity. Channel activity is further modulated, depending on the presence of specific delta subunit isoforms. Interacts (via IQ domain) with CABP1 and CABP4 in a calcium independent manner. Interacts with RIMBP2. Expressed in pancreatic islets and in brain, where it has been seen in cerebral cortex, hippocampus, basal ganglia, habenula and thalamus. Expressed in the small cell lung carcinoma cell line SCC-9. No expression in skeletal muscle.

The protein resides in the membrane. The catalysed reaction is Ca(2+)(in) = Ca(2+)(out). In terms of biological role, voltage-sensitive calcium channels (VSCC) mediate the entry of calcium ions into excitable cells and are also involved in a variety of calcium-dependent processes, including muscle contraction, hormone or neurotransmitter release, gene expression, cell motility, cell division and cell death. The isoform alpha-1D gives rise to L-type calcium currents. Long-lasting (L-type) calcium channels belong to the 'high-voltage activated' (HVA) group. They are blocked by dihydropyridines (DHP), phenylalkylamines, and by benzothiazepines. Functionally, voltage-sensitive calcium channels (VSCC) mediate the entry of calcium ions into excitable cells and are also involved in a variety of calcium-dependent processes, including muscle contraction, hormone or neurotransmitter release, gene expression, cell motility, cell division and cell death. The isoform alpha-1D gives rise to L-type calcium currents. This is Voltage-dependent L-type calcium channel subunit alpha-1D (CACNA1D) from Homo sapiens (Human).